We begin with the raw amino-acid sequence, 281 residues long: Acetyl-coenzyme A carboxylase carboxyl transferase subunit beta (281 aa).

One can recognise a CoA carboxyltransferase N-terminal domain in the interval 24–281; the sequence is GLWYKSPKGK…TKLLTMLANN (258 aa).

The protein belongs to the AccD/PCCB family. As to quaternary structure, acetyl-CoA carboxylase is a heterohexamer composed of biotin carboxyl carrier protein (AccB), biotin carboxylase (AccC) and two subunits each of ACCase subunit alpha (AccA) and ACCase subunit beta (AccD).

It localises to the cytoplasm. It catalyses the reaction N(6)-carboxybiotinyl-L-lysyl-[protein] + acetyl-CoA = N(6)-biotinyl-L-lysyl-[protein] + malonyl-CoA. The protein operates within lipid metabolism; malonyl-CoA biosynthesis; malonyl-CoA from acetyl-CoA: step 1/1. Component of the acetyl coenzyme A carboxylase (ACC) complex. Biotin carboxylase (BC) catalyzes the carboxylation of biotin on its carrier protein (BCCP) and then the CO(2) group is transferred by the transcarboxylase to acetyl-CoA to form malonyl-CoA. The chain is Acetyl-coenzyme A carboxylase carboxyl transferase subunit beta from Amoebophilus asiaticus (strain 5a2).